A 244-amino-acid chain; its full sequence is Tyrosine recombinase XerD-like (244 aa).

In terms of domain architecture, Core-binding (CB) spans methionine 1–tyrosine 73. The 155-residue stretch at alanine 90–arginine 244 folds into the Tyr recombinase domain. Residues lysine 150 and arginine 211 contribute to the active site. Tyrosine 243 acts as the O-(3'-phospho-DNA)-tyrosine intermediate in catalysis.

Belongs to the 'phage' integrase family. XerD-like subfamily.

It is found in the cytoplasm. Functionally, putative tyrosine recombinase. Not involved in the cutting and rejoining of the recombining DNA molecules on dif(SL) site. The sequence is that of Tyrosine recombinase XerD-like from Streptococcus pneumoniae (strain Hungary19A-6).